Consider the following 171-residue polypeptide: Deoxyuridine 5'-triphosphate nucleotidohydrolase (171 aa).

Glu-143 serves as a coordination point for Mg(2+).

The protein belongs to the dUTPase family. Homotrimer. It depends on Mg(2+) as a cofactor.

It catalyses the reaction dUTP + H2O = dUMP + diphosphate + H(+). The protein operates within pyrimidine metabolism; dUMP biosynthesis; dUMP from dCTP (dUTP route): step 2/2. In terms of biological role, this enzyme is involved in nucleotide metabolism: it produces dUMP, the immediate precursor of thymidine nucleotides and it decreases the intracellular concentration of dUTP, preventing uracil incorporation into DNA. In Oryza sativa subsp. japonica (Rice), this protein is Deoxyuridine 5'-triphosphate nucleotidohydrolase (DUT).